We begin with the raw amino-acid sequence, 197 residues long: Putative peptidyl-prolyl cis-trans isomerase (197 aa).

The PPIase cyclophilin-type domain occupies 14-195; it reads GEIKVVMHTN…HDVVIESIDV (182 aa).

It belongs to the cyclophilin-type PPIase family.

It catalyses the reaction [protein]-peptidylproline (omega=180) = [protein]-peptidylproline (omega=0). Functionally, PPIases accelerate the folding of proteins. It catalyzes the cis-trans isomerization of proline imidic peptide bonds in oligopeptides. In Staphylococcus aureus (strain bovine RF122 / ET3-1), this protein is Putative peptidyl-prolyl cis-trans isomerase.